We begin with the raw amino-acid sequence, 386 residues long: Patatin group M-1 (386 aa).

The signal sequence occupies residues 1–23 (MATTKSFLILFFMILATTSSTCA). The 198-residue stretch at 32–229 (LSIDGGGIKG…TVGDPALLSL (198 aa)) folds into the PNPLA domain. Positions 36–41 (GGGIKG) match the GXGXXG motif. The GXSXG motif lies at 75 to 79 (GTSTG). Ser77 serves as the catalytic Nucleophile. Asn115 carries an N-linked (GlcNAc...) asparagine glycan. Asp215 functions as the Proton acceptor in the catalytic mechanism. The DGA/G signature appears at 215-217 (DGG).

The protein belongs to the patatin family. As to expression, tuber.

The protein localises to the vacuole. Probable lipolytic acyl hydrolase (LAH), an activity which is thought to be involved in the response of tubers to pathogens. The protein is Patatin group M-1 of Solanum tuberosum (Potato).